The primary structure comprises 392 residues: Peptidoglycan hydrolase PcsB (392 aa).

The first 27 residues, 1-27 (MKKKILASLLLSTVMVSQVAVLTTAHA), serve as a signal peptide directing secretion. Coiled coils occupy residues 34–96 (IAAQ…LSKN) and 191–227 (TKQA…AEAE). The interacts with large extracellular loop of FtsX stretch occupies residues 47–267 (QQQEAQKQVD…TAQVQAVSES (221 aa)). The Peptidase C51 domain maps to 267 to 390 (SAAAPVRAKV…TSEGFVTYIY (124 aa)).

As to quaternary structure, homodimer. Interacts (via N-terminal coiled coil domain) with FtsX (via large extracellular loop). This interaction directs PcsB to equatorial and septal sites of dividing cells. Interacts with FtsE.

The protein resides in the cell membrane. Its subcellular location is the cell septum. It is found in the secreted. Lacks peptidoglycan-hydrolase activity in vitro, probably due to auto-inhibition by the CC domain. In the homodimer, interaction between the CC domain in one monomer and the hydrolase active site in the peptidase C51/CHAP domain in the other monomer probably mediates auto-inhibition of the hydrolase activity. Its function is as follows. Peptidoglycan-hydrolase activity. Required in maintaining normal growth and cellular morphology. Involved in splitting of the septum during cell division. The chain is Peptidoglycan hydrolase PcsB from Streptococcus pneumoniae serotype 2 (strain D39 / NCTC 7466).